Reading from the N-terminus, the 191-residue chain is Probable ribosome biogenesis protein RLP24 (191 aa).

Ser136 is subject to Phosphoserine.

The protein belongs to the eukaryotic ribosomal protein eL24 family. Associated with nucleolar and cytoplasmic pre-60S particles. At the end of biogenesis it dissociates from cytoplasmic pre-60S particles and is likely to be exchanged for its ribosomal homologue, RPL24.

It is found in the nucleus. Its subcellular location is the nucleolus. Involved in the biogenesis of the 60S ribosomal subunit. Ensures the docking of NOG1 to pre-60S particles. The polypeptide is Probable ribosome biogenesis protein RLP24 (RpL24-like) (Drosophila melanogaster (Fruit fly)).